The primary structure comprises 82 residues: Small ribosomal subunit protein bS16 (82 aa).

It belongs to the bacterial ribosomal protein bS16 family.

This Bdellovibrio bacteriovorus (strain ATCC 15356 / DSM 50701 / NCIMB 9529 / HD100) protein is Small ribosomal subunit protein bS16.